The chain runs to 756 residues: U3 small nucleolar RNA-associated protein 25 homolog (756 aa).

Residues 1-159 (MGKRGSRSQS…SQTSPEEFTD (159 aa)) are disordered. 2 promotes p53/TP53 degradation regions span residues 1–185 (MGKR…SLKA) and 573–635 (VQLP…KKEE). Ser-10 carries the phosphoserine modification. Basic and acidic residues predominate over residues 25–43 (RDFGEEHPFYDRVSRKEAK). Ser-50, Ser-52, Ser-58, Ser-60, Ser-62, and Ser-64 each carry phosphoserine. 2 stretches are compositionally biased toward acidic residues: residues 54 to 64 (DSSDSESDSES) and 84 to 121 (EEEE…EEMA). Residues 636–697 (LNFTHICEYT…YELPTYPHFY (62 aa)) are represses p53/TP53 degradation.

This sequence belongs to the UTP25 family. As to quaternary structure, interacts with CAPN3; the interaction is required for CAPN3 translocation to the nucleolus. Post-translationally, phosphorylated. Phosphorylation is required to promote p53/TP53 degradation in the nucleolus which promotes cell cycle progression and liver development. As to expression, expressed in colon.

The protein resides in the nucleus. It localises to the nucleolus. Component of the ribosomal small subunit processome for the biogenesis of ribosomes, functions in pre-ribosomal RNA (pre-rRNA) processing. Essential for embryonic development in part through the regulation of p53 pathway. Controls the expansion growth of digestive organs and liver. Also involved in the sympathetic neuronal development. Mediates, with CAPN3, the proteasome-independent degradation of p53/TP53. This Homo sapiens (Human) protein is U3 small nucleolar RNA-associated protein 25 homolog.